A 395-amino-acid chain; its full sequence is Major outer membrane porin, serovar F (395 aa).

A signal peptide spans methionine 1–alanine 22.

Belongs to the chlamydial porin (CP) (TC 1.B.2) family. As to quaternary structure, part of a disulfide cross-linked outer membrane complex (COMC) composed of the major outer membrane porin (MOMP), the small cysteine-rich protein (OmcA) and the large cysteine-rich periplasmic protein (OmcB).

Its subcellular location is the cell outer membrane. In terms of biological role, in elementary bodies (EBs, the infectious stage, which is able to survive outside the host cell) provides the structural integrity of the outer envelope through disulfide cross-links with the small cysteine-rich protein and the large cysteine-rich periplasmic protein. It has been described in publications as the Sarkosyl-insoluble COMC (Chlamydia outer membrane complex), and serves as the functional equivalent of peptidoglycan. Permits diffusion of specific solutes through the outer membrane. The polypeptide is Major outer membrane porin, serovar F (ompA) (Chlamydia trachomatis).